Here is a 345-residue protein sequence, read N- to C-terminus: Alanine racemase (345 aa).

The Proton acceptor; specific for D-alanine role is filled by Lys-33. At Lys-33 the chain carries N6-(pyridoxal phosphate)lysine. Residue Arg-128 participates in substrate binding. The active-site Proton acceptor; specific for L-alanine is Tyr-242. Met-291 contributes to the substrate binding site.

It belongs to the alanine racemase family. Pyridoxal 5'-phosphate serves as cofactor.

It catalyses the reaction L-alanine = D-alanine. The protein operates within amino-acid biosynthesis; D-alanine biosynthesis; D-alanine from L-alanine: step 1/1. In terms of biological role, catalyzes the interconversion of L-alanine and D-alanine. May also act on other amino acids. In Ruegeria sp. (strain TM1040) (Silicibacter sp.), this protein is Alanine racemase (alr).